The sequence spans 171 residues: Large ribosomal subunit protein bL9 (171 aa).

This sequence belongs to the bacterial ribosomal protein bL9 family.

In terms of biological role, binds to the 23S rRNA. The polypeptide is Large ribosomal subunit protein bL9 (Rickettsia prowazekii (strain Madrid E)).